Reading from the N-terminus, the 107-residue chain is Integration host factor subunit beta (107 aa).

Residues 76-107 (FVPHFKPGKELRERVDGRAGEPLKADDPDDDR) form a disordered region. The span at 82 to 101 (PGKELRERVDGRAGEPLKAD) shows a compositional bias: basic and acidic residues.

The protein belongs to the bacterial histone-like protein family. As to quaternary structure, heterodimer of an alpha and a beta chain.

Its function is as follows. This protein is one of the two subunits of integration host factor, a specific DNA-binding protein that functions in genetic recombination as well as in transcriptional and translational control. In Burkholderia cenocepacia (strain HI2424), this protein is Integration host factor subunit beta.